A 65-amino-acid polypeptide reads, in one-letter code: Large ribosomal subunit protein bL35 (65 aa).

Belongs to the bacterial ribosomal protein bL35 family.

The polypeptide is Large ribosomal subunit protein bL35 (Prochlorococcus marinus (strain MIT 9313)).